We begin with the raw amino-acid sequence, 408 residues long: Histidine--tRNA ligase (408 aa).

The protein belongs to the class-II aminoacyl-tRNA synthetase family. Homodimer.

The protein resides in the cytoplasm. It carries out the reaction tRNA(His) + L-histidine + ATP = L-histidyl-tRNA(His) + AMP + diphosphate + H(+). This is Histidine--tRNA ligase from Campylobacter lari (strain RM2100 / D67 / ATCC BAA-1060).